A 214-amino-acid polypeptide reads, in one-letter code: Cytochrome b (214 aa).

Helical transmembrane passes span 31–51 (FGSMLLICLMLQTLTGFFLAI), 75–96 (WTMQNLHAISASLFFICIYIHI), 111–131 (WLSGVTLLFTLMATAFFGYVL), and 176–196 (FFALHFILPFIIISLSSAHIM). 2 residues coordinate heme b: histidine 81 and histidine 95. Histidine 180 and histidine 194 together coordinate heme b. Position 199 (histidine 199) interacts with a ubiquinone.

This sequence belongs to the cytochrome b family. As to quaternary structure, the cytochrome bc1 complex contains 3 respiratory subunits (MT-CYB, CYC1 and UQCRFS1), 2 core proteins (UQCRC1 and UQCRC2) and probably 6 low-molecular weight proteins. The cofactor is heme b.

The protein resides in the mitochondrion inner membrane. Its function is as follows. Component of the ubiquinol-cytochrome c reductase complex (complex III or cytochrome b-c1 complex) that is part of the mitochondrial respiratory chain. The b-c1 complex mediates electron transfer from ubiquinol to cytochrome c. Contributes to the generation of a proton gradient across the mitochondrial membrane that is then used for ATP synthesis. In Elapsoidea semiannulata (Angolan garter snake), this protein is Cytochrome b (MT-CYB).